A 182-amino-acid chain; its full sequence is Flagellar transcriptional regulator FlhC (182 aa).

Zn(2+) is bound by residues C138, C141, C158, and C161.

Belongs to the FlhC family. In terms of assembly, heterohexamer composed of two FlhC and four FlhD subunits. Each FlhC binds a FlhD dimer, forming a heterotrimer, and a hexamer assembles by dimerization of two heterotrimers. Requires Zn(2+) as cofactor.

It is found in the cytoplasm. In terms of biological role, functions in complex with FlhD as a master transcriptional regulator that regulates transcription of several flagellar and non-flagellar operons by binding to their promoter region. Activates expression of class 2 flagellar genes, including fliA, which is a flagellum-specific sigma factor that turns on the class 3 genes. Also regulates genes whose products function in a variety of physiological pathways. The polypeptide is Flagellar transcriptional regulator FlhC (Gallionella capsiferriformans (strain ES-2) (Gallionella ferruginea capsiferriformans (strain ES-2))).